A 143-amino-acid chain; its full sequence is Nucleoside diphosphate kinase (143 aa).

Lys11, Phe59, Arg87, Thr93, Arg104, and Asn114 together coordinate ATP. The active-site Pros-phosphohistidine intermediate is His117.

This sequence belongs to the NDK family. In terms of assembly, homotetramer. The cofactor is Mg(2+).

The protein localises to the cytoplasm. It carries out the reaction a 2'-deoxyribonucleoside 5'-diphosphate + ATP = a 2'-deoxyribonucleoside 5'-triphosphate + ADP. It catalyses the reaction a ribonucleoside 5'-diphosphate + ATP = a ribonucleoside 5'-triphosphate + ADP. Functionally, major role in the synthesis of nucleoside triphosphates other than ATP. The ATP gamma phosphate is transferred to the NDP beta phosphate via a ping-pong mechanism, using a phosphorylated active-site intermediate. This is Nucleoside diphosphate kinase from Acinetobacter baylyi (strain ATCC 33305 / BD413 / ADP1).